We begin with the raw amino-acid sequence, 557 residues long: Phosphoribosylaminoimidazole carboxylase, chloroplastic (557 aa).

An ATP-grasp domain is found at K108–V293. W132 to A189 is a binding site for ATP. Residues C387–S557 form an AIR carboxylase catalytic subunit region.

In the C-terminal section; belongs to the AIR carboxylase family. Class I subfamily.

It is found in the plastid. Its subcellular location is the chloroplast. The enzyme catalyses 5-amino-1-(5-phospho-D-ribosyl)imidazole-4-carboxylate + H(+) = 5-amino-1-(5-phospho-beta-D-ribosyl)imidazole + CO2. Its pathway is purine metabolism; IMP biosynthesis via de novo pathway; 5-amino-1-(5-phospho-D-ribosyl)imidazole-4-carboxylate from 5-amino-1-(5-phospho-D-ribosyl)imidazole (carboxylase route): step 1/1. In Vigna aconitifolia (Moth bean), this protein is Phosphoribosylaminoimidazole carboxylase, chloroplastic (PURKE).